The following is a 299-amino-acid chain: Trimeric intracellular cation channel type A (299 aa).

Residues 1 to 18 (MELLSALSLGELALSFSR) are Lumenal-facing. The chain crosses the membrane as a helical span at residues 19 to 39 (VPLFPVFDLSYFIVSILYLKY). Residues 40–51 (EPGAVELSRRHP) lie on the Cytoplasmic side of the membrane. Residues 52–72 (IASWLCAMLHCFGSYILADLL) form a helical membrane-spanning segment. The Lumenal segment spans residues 73–85 (LGEPLIDYFSNNS). Glycine 74 is a Ca(2+) binding site. A helical membrane pass occupies residues 86–106 (SILLASAVWYLIFFCPLDLFY). The Cytoplasmic segment spans residues 107-144 (KCVCFLPVKLIFVAMKEVVRVRKIAVGIHHAHHHYHHG). A 1,2-diacyl-sn-glycero-3-phospho-(1D-myo-inositol-4,5-bisphosphate) contacts are provided by lysine 122 and arginine 126. The chain crosses the membrane as a helical span at residues 145–165 (WFVMIATGWVKGSGVALMSNF). Over 166–178 (EQLLRGVWKPETN) the chain is Lumenal. Residues 179-199 (EILHMSFPTKASLYGAILFTL) traverse the membrane as a helical segment. The Cytoplasmic segment spans residues 200-209 (QQTRWLPVSK). The chain crosses the membrane as a helical span at residues 210-230 (ASLIFIFTLFMVSCKVFLTAT). The Lumenal segment spans residues 231-234 (HSHS). A helical membrane pass occupies residues 235 to 255 (SPFDALEGYICPVLFGSACGG). Over 256–299 (DHHHDNHGGSHSGGGPGAQHSAMPAKSKEELSEGSRKKKAKKAD) the chain is Cytoplasmic. The segment at 260–299 (DNHGGSHSGGGPGAQHSAMPAKSKEELSEGSRKKKAKKAD) is disordered. The span at 281–290 (KSKEELSEGS) shows a compositional bias: basic and acidic residues.

This sequence belongs to the TMEM38 family. Homotrimer; conformation seems to be controled by binding to diacylglycerol (DAG).

It localises to the sarcoplasmic reticulum membrane. It is found in the nucleus membrane. It catalyses the reaction K(+)(in) = K(+)(out). With respect to regulation, channel activity is activated by a change of voltage within the sarcoplasmic reticulum lumen and blocked by luminal high Ca(2+) levels. Functionally, intracellular monovalent cation channel required for maintenance of rapid intracellular calcium release. Acts as a potassium counter-ion channel that functions in synchronization with calcium release from intracellular stores. Opened by a change of voltage within the sarcoplasmic reticulum lumen. The sequence is that of Trimeric intracellular cation channel type A from Homo sapiens (Human).